We begin with the raw amino-acid sequence, 152 residues long: UPF0735 ACT domain-containing protein CTC_00116 (152 aa).

Positions 76–151 (IISVTLNHRP…NVIKLDLIAM (76 aa)) constitute an ACT domain.

The protein belongs to the UPF0735 family.

This chain is UPF0735 ACT domain-containing protein CTC_00116, found in Clostridium tetani (strain Massachusetts / E88).